Here is a 589-residue protein sequence, read N- to C-terminus: Phenylalanine--tRNA ligase beta subunit (589 aa).

The B5 domain maps to 302 to 379 (LAYRKEMVRA…IAYGYSNIQM (78 aa)). The Mg(2+) site is built by aspartate 357, aspartate 363, glutamate 366, and aspartate 367.

It belongs to the phenylalanyl-tRNA synthetase beta subunit family. Type 2 subfamily. As to quaternary structure, heterotetramer; dimer of two heterodimers formed by FARSA and FARSB. Requires Mg(2+) as cofactor.

The protein resides in the cytoplasm. The enzyme catalyses tRNA(Phe) + L-phenylalanine + ATP = L-phenylalanyl-tRNA(Phe) + AMP + diphosphate + H(+). The protein is Phenylalanine--tRNA ligase beta subunit (FARSB) of Pongo abelii (Sumatran orangutan).